A 693-amino-acid chain; its full sequence is UvrABC system protein B (693 aa).

Positions 35–188 (ERINNGEKDV…DQLLRQFVGI (154 aa)) constitute a Helicase ATP-binding domain. An ATP-binding site is contributed by 48–55 (GATGTGKS). A Beta-hairpin motif is present at residues 101–124 (YYDYYQPEAYVPQTDTFIEKDSSV). In terms of domain architecture, Helicase C-terminal spans 438–600 (QIDDLLGEIR…VDPTPLRKRI (163 aa)). The tract at residues 612-634 (ADTKSLLESAGKGRSRGKAPVPV) is disordered. The 36-residue stretch at 648–683 (VDLIEQLTAQMHSAAGELQFELAARLRDEVGDLKKE) folds into the UVR domain.

Belongs to the UvrB family. Forms a heterotetramer with UvrA during the search for lesions. Interacts with UvrC in an incision complex.

It is found in the cytoplasm. Functionally, the UvrABC repair system catalyzes the recognition and processing of DNA lesions. A damage recognition complex composed of 2 UvrA and 2 UvrB subunits scans DNA for abnormalities. Upon binding of the UvrA(2)B(2) complex to a putative damaged site, the DNA wraps around one UvrB monomer. DNA wrap is dependent on ATP binding by UvrB and probably causes local melting of the DNA helix, facilitating insertion of UvrB beta-hairpin between the DNA strands. Then UvrB probes one DNA strand for the presence of a lesion. If a lesion is found the UvrA subunits dissociate and the UvrB-DNA preincision complex is formed. This complex is subsequently bound by UvrC and the second UvrB is released. If no lesion is found, the DNA wraps around the other UvrB subunit that will check the other stand for damage. The chain is UvrABC system protein B from Renibacterium salmoninarum (strain ATCC 33209 / DSM 20767 / JCM 11484 / NBRC 15589 / NCIMB 2235).